Reading from the N-terminus, the 130-residue chain is ATP synthase epsilon chain (130 aa).

This sequence belongs to the ATPase epsilon chain family. As to quaternary structure, F-type ATPases have 2 components, CF(1) - the catalytic core - and CF(0) - the membrane proton channel. CF(1) has five subunits: alpha(3), beta(3), gamma(1), delta(1), epsilon(1). CF(0) has three main subunits: a, b and c.

Its subcellular location is the cell inner membrane. Its function is as follows. Produces ATP from ADP in the presence of a proton gradient across the membrane. This chain is ATP synthase epsilon chain, found in Sulfurimonas denitrificans (strain ATCC 33889 / DSM 1251) (Thiomicrospira denitrificans (strain ATCC 33889 / DSM 1251)).